A 269-amino-acid chain; its full sequence is Adenylate kinase (269 aa).

An ATP-binding site is contributed by 61-66 (GAGKGT). Residues 81–110 (ATGDMLREQVARQTELGKAAKQIMDQGGLV) are NMP. Residues Thr82, Arg87, 108 to 110 (GLV), 137 to 140 (GFPR), and Gln144 contribute to the AMP site. The segment at 178-215 (GRLVHPASGRSYHKEFNPPKKPMTDDITGEPLIQRSDD) is LID. ATP-binding positions include Arg179 and 188–189 (SY). AMP contacts are provided by Arg212 and Arg223. Gln251 serves as a coordination point for ATP.

This sequence belongs to the adenylate kinase family. AK2 subfamily. As to quaternary structure, monomer.

The protein resides in the cytoplasm. It is found in the cytosol. Its subcellular location is the mitochondrion intermembrane space. It carries out the reaction AMP + ATP = 2 ADP. In terms of biological role, catalyzes the reversible transfer of the terminal phosphate group between ATP and AMP. Plays an important role in cellular energy homeostasis and in adenine nucleotide metabolism. Adenylate kinase activity is critical for regulation of the phosphate utilization and the AMP de novo biosynthesis pathways. The sequence is that of Adenylate kinase from Cryptococcus neoformans var. neoformans serotype D (strain B-3501A) (Filobasidiella neoformans).